An 898-amino-acid polypeptide reads, in one-letter code: MSLQKLENSSNKSVVQEEVLILTELLEDITKNMLAPETFEKIIQLKELSTQEDYQGLNRLVTSLSNDEMVYISRYFSILPLLINISEDVDLAYEINHQNNIDQDYLGKLSTTIKLVAEKENAVEILEHLNVVPVLTAHPTQVQRKSMLDLTNHIHSLLRKYRDVKLGLINKDKWYNDLRRYIEIIMQTDMIREKKLKVTNEITNAMEYYNSSFLKAVPHLTTEYKRLAQAHGLNLKQAKPITMGMWIGGDRDGNPFVTAKTLKQSALTQCEVIMNYYDKKIYQLYREFSLSTSIVNVSKQVREMARQSKDNSIYREKELYRRALFDIQSKIQATKTYLIEDEEVGTRYETANDFYKDLIAIRDSLLENKGESLISGDFVELLQAVEIFGFYLASIDMRQDSSVYEACVAELLKSAGIHSRYSELSEEEKCDLLLKELEEDPRILSATHAEKSELLAKELAIFKTARVLKDKLGDDVIRQTIISHATSLSDMLELAILLKEVGLVDTERARVQIVPLFETIEDLDHSEETMRKYLSLSLAKKWIDSRNNYQEIMLGYSDSNKDGGYLSSCWTLYKAQQQLTAIGDEFGVKVTFFHGRGGTVGRGGGPTYEAITSQPLKSIKDRIRLTEQGEVIGNKYGNKDAAYYNLEMLVSAAINRMITQKKSDTNTPNRYEAIMDQVVDRSYDIYRDLVFGNEHFYDYFFESSPIKAISSFNIGSRPAARKTITEIGGLRAIPWVFSWSQSRVMFPGWYGVGSSFKEFINKNPENIAILRDMYQNWPFFQSLLSNVDMVLSKSNMNIAFEYAKLCEDEQVKAIYETILNEWQVTKNVILAIEGHDELLADNPYLKASLDYRMPYFNILNYIQLELIKRQRRGELSSDQERLIHITINGIATGLRNSG.

Active-site residues include H138 and K561.

It belongs to the PEPCase type 1 family. The cofactor is Mg(2+).

The enzyme catalyses oxaloacetate + phosphate = phosphoenolpyruvate + hydrogencarbonate. In terms of biological role, forms oxaloacetate, a four-carbon dicarboxylic acid source for the tricarboxylic acid cycle. In Streptococcus pneumoniae serotype 2 (strain D39 / NCTC 7466), this protein is Phosphoenolpyruvate carboxylase.